A 187-amino-acid polypeptide reads, in one-letter code: 3'-5' DNA exonuclease Cap18 (187 aa).

Residues Val-9–Phe-173 form the Exonuclease domain. Positions 12, 25, 160, and 165 each coordinate Mg(2+). His-160 functions as the Proton donor/acceptor in the catalytic mechanism.

This sequence belongs to the Cap18 exonuclease family. As to quaternary structure, homodimer.

Effector component of a CBASS antivirus system. CBASS (cyclic oligonucleotide-based antiphage signaling system) provides immunity against bacteriophage. The CD-NTase protein synthesizes cyclic nucleotides in response to infection; these serve as specific second messenger signals. The signals activate a diverse range of effectors, leading to bacterial cell death and thus abortive phage infection. A type III CBASS system. A sequence non-specific 3'-5' DNA exonuclease that preferentially degrades ssDNA with 3' overhangs or a mismatch at the 3' end. Expression of this CBASS system (Cap17-CapW-CdnC-Cap7-Cap6-Cap18-Cap19) in a susceptible E.coli (strain JP313) confers resistance to bacteriophage lambda cI--. In Escherichia coli, this protein is 3'-5' DNA exonuclease Cap18.